The sequence spans 423 residues: Phospholipase A1-IIalpha (423 aa).

Positions 194-217 (SAQEQVQGELKRLLELYKDEEISI) form a coiled coil. The active-site Acyl-ester intermediate is the S223. Active-site charge relay system residues include S223, D290, and H327. Positions 399–423 (HDDDVDADDNDDSSTSNQLQELNTD) are disordered. Over residues 401-410 (DDVDADDNDD) the composition is skewed to acidic residues. The segment covering 411 to 423 (SSTSNQLQELNTD) has biased composition (polar residues).

Belongs to the AB hydrolase superfamily. Lipase family.

It is found in the cytoplasm. Acylhydrolase that catalyzes the hydrolysis of phospholipids at the sn-1 position. This Arabidopsis thaliana (Mouse-ear cress) protein is Phospholipase A1-IIalpha.